Consider the following 235-residue polypeptide: Large ribosomal subunit protein uL1 (235 aa).

The protein belongs to the universal ribosomal protein uL1 family. As to quaternary structure, part of the 50S ribosomal subunit.

Binds directly to 23S rRNA. The L1 stalk is quite mobile in the ribosome, and is involved in E site tRNA release. Its function is as follows. Protein L1 is also a translational repressor protein, it controls the translation of the L11 operon by binding to its mRNA. This is Large ribosomal subunit protein uL1 from Arthrobacter sp. (strain FB24).